Consider the following 846-residue polypeptide: Translation initiation factor IF-2 (846 aa).

Positions 345–512 (SRAPVVTIMG…AVLLQSEVLE (168 aa)) constitute a tr-type G domain. The interval 354–361 (GHVDHGKT) is G1. 354–361 (GHVDHGKT) serves as a coordination point for GTP. Residues 379-383 (GITQH) form a G2 region. The G3 stretch occupies residues 400–403 (DTPG). Residues 400–404 (DTPGH) and 454–457 (NKID) contribute to the GTP site. The segment at 454 to 457 (NKID) is G4. Positions 490 to 492 (SAK) are G5.

Belongs to the TRAFAC class translation factor GTPase superfamily. Classic translation factor GTPase family. IF-2 subfamily.

Its subcellular location is the cytoplasm. Its function is as follows. One of the essential components for the initiation of protein synthesis. Protects formylmethionyl-tRNA from spontaneous hydrolysis and promotes its binding to the 30S ribosomal subunits. Also involved in the hydrolysis of GTP during the formation of the 70S ribosomal complex. The protein is Translation initiation factor IF-2 of Francisella tularensis subsp. holarctica (strain FTNF002-00 / FTA).